The chain runs to 218 residues: Probable nicotinate-nucleotide adenylyltransferase (218 aa).

It belongs to the NadD family.

The catalysed reaction is nicotinate beta-D-ribonucleotide + ATP + H(+) = deamido-NAD(+) + diphosphate. Its pathway is cofactor biosynthesis; NAD(+) biosynthesis; deamido-NAD(+) from nicotinate D-ribonucleotide: step 1/1. Its function is as follows. Catalyzes the reversible adenylation of nicotinate mononucleotide (NaMN) to nicotinic acid adenine dinucleotide (NaAD). The sequence is that of Probable nicotinate-nucleotide adenylyltransferase from Burkholderia cenocepacia (strain ATCC BAA-245 / DSM 16553 / LMG 16656 / NCTC 13227 / J2315 / CF5610) (Burkholderia cepacia (strain J2315)).